The primary structure comprises 323 residues: Probable oxidoreductase patJ (323 aa).

Residues 291–323 (DQSANGVNGHATGVEAKKKQLGDMTRRRSGAQE) are disordered. The segment covering 305–316 (EAKKKQLGDMTR) has biased composition (basic and acidic residues).

The protein belongs to the oxidoreductase OpS7 family.

It is found in the vacuole lumen. Its subcellular location is the cytoplasmic vesicle lumen. The protein operates within mycotoxin biosynthesis; patulin biosynthesis. Functionally, probable oxidoreductase; part of the gene cluster that mediates the biosynthesis of patulin, an acetate-derived tetraketide mycotoxin produced by several fungal species that shows antimicrobial properties against several bacteria. PatJ acts with patO in the vacuole to convert gentisyl alcohol to isoepoxydon. The pathway begins with the synthesis of 6-methylsalicylic acid by the polyketide synthase (PKS) patK via condensation of acetate and malonate units. The 6-methylsalicylic acid decarboxylase patG then catalyzes the decarboxylation of 6-methylsalicylic acid to yield m-cresol (also known as 3-methylphenol). These first reactions occur in the cytosol. The intermediate m-cresol is then transported into the endoplasmic reticulum where the cytochrome P450 monooxygenase patH converts it to m-hydroxybenzyl alcohol, which is further converted to gentisyl alcohol by the cytochrome P450 monooxygenase patI. The oxidoreductases patJ and patO further convert gentisyl alcohol to isoepoxydon in the vacuole. PatN catalyzes then the transformation of isoepoxydon into phyllostine. The cluster protein patF is responsible for the conversion from phyllostine to neopatulin whereas the alcohol dehydrogenase patD converts neopatulin to E-ascladiol. The steps between isoepoxydon and E-ascladiol occur in the cytosol, and E-ascladiol is probably secreted to the extracellular space by one of the cluster-specific transporters patC or patM. Finally, the secreted patulin synthase patE catalyzes the conversion of E-ascladiol to patulin. The sequence is that of Probable oxidoreductase patJ from Aspergillus clavatus (strain ATCC 1007 / CBS 513.65 / DSM 816 / NCTC 3887 / NRRL 1 / QM 1276 / 107).